The sequence spans 182 residues: Large ribosomal subunit protein uL6 (182 aa).

The protein belongs to the universal ribosomal protein uL6 family. Part of the 50S ribosomal subunit.

This protein binds to the 23S rRNA, and is important in its secondary structure. It is located near the subunit interface in the base of the L7/L12 stalk, and near the tRNA binding site of the peptidyltransferase center. This Methanococcus maripaludis (strain C5 / ATCC BAA-1333) protein is Large ribosomal subunit protein uL6.